The sequence spans 20 residues: PEDPQRRYQEXQREXRXQQE.

The disordered stretch occupies residues 1–20 (PEDPQRRYQEXQREXRXQQE).

In terms of assembly, heterodimer of a large and a small subunit.

Its function is as follows. Possesses antifungal activity against P.infestans but not F.graminearum. This chain is Antifungal protein 2 large subunit, found in Malva parviflora (Little mallow).